Consider the following 91-residue polypeptide: uncharacterized protein (91 aa).

2 consecutive transmembrane segments (helical) span residues 5–27 (FFKYSVLLLPALINLAAFLTNFQ) and 47–69 (DFYHLTGNIVVYIVSAFLSFIFF).

Its subcellular location is the cell membrane. This is an uncharacterized protein from Archaeoglobus fulgidus (strain ATCC 49558 / DSM 4304 / JCM 9628 / NBRC 100126 / VC-16).